The primary structure comprises 480 residues: Alpha-glucosidase (480 aa).

NAD(+) is bound at residue 4 to 70; sequence VKIGIIGAGS…ADLKFEKTTS (67 aa). Asp-119 and Asn-153 together coordinate substrate. Cys-174 lines the Mn(2+) pocket. His-175 (proton donor) is an active-site residue. His-203 is a Mn(2+) binding site. The Proton acceptor role is filled by Asp-260.

Belongs to the glycosyl hydrolase 4 family. As to quaternary structure, homodimer. The cofactor is NAD(+). It depends on Mn(2+) as a cofactor.

The enzyme catalyses Hydrolysis of terminal, non-reducing (1-&gt;4)-linked alpha-D-glucose residues with release of alpha-D-glucose.. Inhibited by EDTA in vitro. In terms of biological role, is able to hydrolyze diverse types of alpha-glycoside bonds in di- and trisaccharides: alpha-1,4 bonds of maltose and maltotriose, alpha-1,1 bonds of trehalose, alpha-1,2 bonds of sucrose, alpha-1,3 bonds of turanose and melizitose, alpha-1,6 bonds of isomaltose and melibiose. AglA is not specific with respect to the configuration at the C-4 position of its substrates because it also possesses alpha-galactosidase activity. Acts on the substrate from the non-reducing end of the chain. The activity of AglA drops with increasing length of the saccharide chain. Does not hydrolyze alpha-, beta-, and gamma-cyclodextrins or polysaccharides (starch, pullulan, amylose, amylopectin, glycogen). Does not cleave beta-glycosidic bonds in di-, oligo-, or polysaccharides. This chain is Alpha-glucosidase (aglA), found in Thermotoga neapolitana.